A 561-amino-acid chain; its full sequence is MQIQSFYHSASLKTQEAFKSLQKTLYNGMQILSGQGKAPAKAPDARPEIIVLREPGATWGNYLQHQKTSNHSLHNLYNLQRDLLTVAATVLGKQDPVLTSMANQMELAKVKADRPATKQEEAAAKALKKNLIELIAARTQQQNGLPAKEAHRFAAVAFRDAQVKQLNNQPWQTIKNTLTHNGHHYTNTQLPAAEMKIGAKDIFPSAYEGKGVCSWDTKNIHHANNLWMSTVSVHEDGKDKTLFCGIRHGVLSPYHEKDPLLRQAGAENKAKEVLAAALFSKPELLNRALEGEAVSLKLVSVGLLTASNIFGKEGTMVEDQMRAWQSLTQPGKMIHLKIRNKDGDLQTVKIKPDVAAFNVGVNELALKLGFGLKASDSYNAEALHQLLGNDLRPEARPGGWVGEWLAQYPDNYEVVNTLARQIKDIWKNNQHHKDGGEPYKLAQRLAMLAHEIDAVPAWNCKSGKDRTGMMDSEIKRELISFHQTHMLSAPGSLPDSGGQKIFQKVLLNSGNLEIQKQNTGGAGNKVMKNLSPEVLNLSYQKRVGDENIWQSVKGISSLITS.

Cys460 is a catalytic residue. Positions 460-466 match the CX5R motif motif; that stretch reads CKSGKDR.

This sequence belongs to the phosphatase IpgD/SopB family.

The protein localises to the secreted. Functionally, converts phosphatidylinositol 3,4,5-trisphosphate (PtdIns 3,4,5-P3) to PtdIns 3-P and prevents the transition of PtdIns 3-P to PtdIns 3,5-P2. It is one of the known effectors injected by Salmonella into the host cell and is required for invasion and for an efficient generation and maintenance of Salmonella-containing vacuole (SVC). Alteration of the phosphoinositide composition of the plasma membrane causes membrane ruffling and actin cytoskeleton rearrangements. The persistence of PtdIns 3-P diverts the SCV from the endocytic pathway resulting in enlarged vesicles, which are essential to create a favorable environment where Salmonella can replicate and avoid immune defenses of the host cell. The protein is Inositol phosphate phosphatase SopB (sopB) of Salmonella typhi.